The sequence spans 511 residues: 2-isopropylmalate synthase (511 aa).

The 264-residue stretch at 6-269 (IIIFDTTLRD…YTDIKCENIF (264 aa)) folds into the Pyruvate carboxyltransferase domain. Residues D15, H203, H205, and N239 each contribute to the Mn(2+) site. The segment at 394–511 (VIEKLSVISG…SLKVEERKMA (118 aa)) is regulatory domain.

It belongs to the alpha-IPM synthase/homocitrate synthase family. LeuA type 1 subfamily. Homodimer. Mn(2+) is required as a cofactor.

It is found in the cytoplasm. It carries out the reaction 3-methyl-2-oxobutanoate + acetyl-CoA + H2O = (2S)-2-isopropylmalate + CoA + H(+). Its pathway is amino-acid biosynthesis; L-leucine biosynthesis; L-leucine from 3-methyl-2-oxobutanoate: step 1/4. In terms of biological role, catalyzes the condensation of the acetyl group of acetyl-CoA with 3-methyl-2-oxobutanoate (2-ketoisovalerate) to form 3-carboxy-3-hydroxy-4-methylpentanoate (2-isopropylmalate). The polypeptide is 2-isopropylmalate synthase (Campylobacter jejuni subsp. jejuni serotype O:23/36 (strain 81-176)).